Here is a 335-residue protein sequence, read N- to C-terminus: uncharacterized protein (335 aa).

Solcar repeat units follow at residues 22-129 (VKPI…LLPL), 134-227 (GFPA…IRLF), and 244-327 (KDLY…TKKY). Helical transmembrane passes span 28–48 (MLSA…LDVV), 104–123 (GLVP…FLGY), 133–154 (WGFP…ATIV), 195–219 (GILN…FYWW), 246–263 (LYIN…ATLL), and 307–323 (CVKV…SYHL).

Belongs to the mitochondrial carrier (TC 2.A.29) family.

The protein localises to the mitochondrion inner membrane. This is an uncharacterized protein from Schizosaccharomyces pombe (strain 972 / ATCC 24843) (Fission yeast).